A 657-amino-acid polypeptide reads, in one-letter code: N-acetylgalactosaminyltransferase 7 (657 aa).

Residues 1–6 (MRLKIG) lie on the Cytoplasmic side of the membrane. A helical; Signal-anchor for type II membrane protein membrane pass occupies residues 7–29 (FILRSLLVVGSFLGLVVLWSSLS). Disordered regions lie at residues 30–66 (SRPDDQSPLSRMREDRDVNNPLPNRGGNGLAPGDDRF) and 83–105 (ESIRRKNKAKNEQERHAGGDSQR). The Lumenal segment spans residues 30-657 (SRPDDQSPLS…KWEMNNIHSV (628 aa)). 5 disulfides stabilise this stretch: C197–C435, C426–C507, C545–C562, C585–C600, and C625–C640. The segment at 206 to 317 (LLTSSVVIVF…VNWYAPLVAP (112 aa)) is catalytic subdomain A. Residues D247 and R277 each contribute to the substrate site. Positions 301 and 303 each coordinate Mn(2+). A catalytic subdomain B region spans residues 381–443 (PYRSPAMAGG…PCSRVGHIYR (63 aa)). W412 is a binding site for substrate. Mn(2+) is bound at residue H440. Substrate is bound at residue R443. One can recognise a Ricin B-type lectin domain in the interval 532–652 (VEWGEIRGLE…SKMTQKWEMN (121 aa)).

This sequence belongs to the glycosyltransferase 2 family. GalNAc-T subfamily. Requires Mn(2+) as cofactor. As to expression, highly expressed in sublingual gland. Expressed at lower level in stomach, small intestiine and colon.

Its subcellular location is the golgi apparatus membrane. It catalyses the reaction L-seryl-[protein] + UDP-N-acetyl-alpha-D-galactosamine = a 3-O-[N-acetyl-alpha-D-galactosaminyl]-L-seryl-[protein] + UDP + H(+). The enzyme catalyses L-threonyl-[protein] + UDP-N-acetyl-alpha-D-galactosamine = a 3-O-[N-acetyl-alpha-D-galactosaminyl]-L-threonyl-[protein] + UDP + H(+). The protein operates within protein modification; protein glycosylation. Its function is as follows. Glycopeptide transferase involved in O-linked oligosaccharide biosynthesis, which catalyzes the transfer of an N-acetyl-D-galactosamine residue to an already glycosylated peptide. In contrast to other proteins of the family, it does not act as a peptide transferase that transfers GalNAc onto serine or threonine residue on the protein receptor, but instead requires the prior addition of a GalNAc on a peptide before adding additional GalNAc moieties. Some peptide transferase activity is however not excluded, considering that its appropriate peptide substrate may remain unidentified. The sequence is that of N-acetylgalactosaminyltransferase 7 (Galnt7) from Mus musculus (Mouse).